A 282-amino-acid chain; its full sequence is WRKY transcription factor 71 (282 aa).

The tract at residues 63-121 (LTSNSPVVSSSSNEGEPKENTNDKSDQMEDNEGDLHGVGESSKQLTKQGKKKGEKKERE) is disordered. Low complexity predominate over residues 65-75 (SNSPVVSSSSN). A compositionally biased stretch (basic and acidic residues) spans 77–99 (GEPKENTNDKSDQMEDNEGDLHG). The WRKY DNA-binding region spans 130 to 195 (SEIDHLEDGY…YEGKHNHPIP (66 aa)).

The protein belongs to the WRKY group II-c family.

It is found in the nucleus. Functionally, transcription factor. Interacts specifically with the W box (5'-(T)TGAC[CT]-3'), a frequently occurring elicitor-responsive cis-acting element. In Arabidopsis thaliana (Mouse-ear cress), this protein is WRKY transcription factor 71 (WRKY71).